Here is a 365-residue protein sequence, read N- to C-terminus: MINLGDKQSTIVVAMSGGVDSSAVAAMLHEQGHNVIGITLQLYDHGMAVGKKNACCAGQDIYDAKMVANKLGIPHYVLDYESKFKESVIDNFVDSYLQGETPLPCVQCNKSVKFRDLIKTARELGADKLATGHYVRKINGDNGAELHTGLDPAKDQSYFLFTTTKEQLEYLRFPLGGLTKDETRKLASKFGLEVADKPDSQDICFIPDGNYKSVINKIRPNSSESGKIIHVNGFELGEHSGIINYTIGQRRGLGIAYNEPLYVVKIDPKDNVVYVGPESALNVQEFIIRDVNWLADEIKDNEKLEVAVKIRSTRPPRLAEISKFGDDKMKVKFLCEEKAVAPGQACVIYAGARVLGGGWITREIR.

ATP-binding positions include 14-21 (AMSGGVDS) and Leu-40. Residue Cys-108 is the Nucleophile of the active site. A disulfide bond links Cys-108 and Cys-204. ATP is bound at residue Gly-132. The interval 154–156 (KDQ) is interaction with tRNA. Residue Cys-204 is the Cysteine persulfide intermediate of the active site.

The protein belongs to the MnmA/TRMU family.

It localises to the cytoplasm. It catalyses the reaction S-sulfanyl-L-cysteinyl-[protein] + uridine(34) in tRNA + AH2 + ATP = 2-thiouridine(34) in tRNA + L-cysteinyl-[protein] + A + AMP + diphosphate + H(+). Its function is as follows. Catalyzes the 2-thiolation of uridine at the wobble position (U34) of tRNA, leading to the formation of s(2)U34. This Rickettsia africae (strain ESF-5) protein is tRNA-specific 2-thiouridylase MnmA.